The primary structure comprises 446 residues: Histidine--tRNA ligase (446 aa).

Belongs to the class-II aminoacyl-tRNA synthetase family. Homodimer.

The protein resides in the cytoplasm. The enzyme catalyses tRNA(His) + L-histidine + ATP = L-histidyl-tRNA(His) + AMP + diphosphate + H(+). This is Histidine--tRNA ligase from Burkholderia lata (strain ATCC 17760 / DSM 23089 / LMG 22485 / NCIMB 9086 / R18194 / 383).